The primary structure comprises 351 residues: Protein RecA (351 aa).

64-71 (GPESSGKT) is an ATP binding site. The disordered stretch occupies residues 330–351 (DRFLQNGGPDPDDGDGDATAEM). Residues 339–351 (DPDDGDGDATAEM) show a composition bias toward acidic residues.

The protein belongs to the RecA family.

It is found in the cytoplasm. Can catalyze the hydrolysis of ATP in the presence of single-stranded DNA, the ATP-dependent uptake of single-stranded DNA by duplex DNA, and the ATP-dependent hybridization of homologous single-stranded DNAs. It interacts with LexA causing its activation and leading to its autocatalytic cleavage. The sequence is that of Protein RecA from Rhizobium leguminosarum bv. viciae.